Reading from the N-terminus, the 468-residue chain is Protein C-ets-2 (468 aa).

Residues 85 to 170 (ATFSGFQKEQ…EHLEQMIKEN (86 aa)) form the PNT domain. 2 positions are modified to phosphoserine: Ser220 and Ser225. The segment at 262–290 (VNLLNNNSGKPKDHDSPENGGDSFESSDS) is disordered. Phosphoserine occurs at positions 294, 297, and 300. Positions 362–442 (IQLWQFLLEL…SGKRYVYRFV (81 aa)) form a DNA-binding region, ETS.

It belongs to the ETS family. In terms of processing, phosphorylation by CDK10 at Ser-220 and Ser-225 creates a phosphodegron that targets ETS2 for proteasomal degradation.

It localises to the nucleus. In terms of biological role, transcription factor activating transcription. Binds specifically the GGA DNA motif in gene promoters and stimulates transcription of those genes. The sequence is that of Protein C-ets-2 (Ets2) from Mus musculus (Mouse).